We begin with the raw amino-acid sequence, 154 residues long: Myoglobin (154 aa).

Residues 2–148 (GLSDGEWQLV…FRNDIAAKYK (147 aa)) enclose the Globin domain. The residue at position 4 (serine 4) is a Phosphoserine. Position 65 (histidine 65) interacts with nitrite. Residue histidine 65 participates in O2 binding. Residue threonine 68 is modified to Phosphothreonine. Histidine 94 contacts heme b.

This sequence belongs to the globin family. As to quaternary structure, monomeric.

The protein resides in the cytoplasm. It is found in the sarcoplasm. The enzyme catalyses Fe(III)-heme b-[protein] + nitric oxide + H2O = Fe(II)-heme b-[protein] + nitrite + 2 H(+). It catalyses the reaction H2O2 + AH2 = A + 2 H2O. In terms of biological role, monomeric heme protein which primary function is to store oxygen and facilitate its diffusion within muscle tissues. Reversibly binds oxygen through a pentacoordinated heme iron and enables its timely and efficient release as needed during periods of heightened demand. Depending on the oxidative conditions of tissues and cells, and in addition to its ability to bind oxygen, it also has a nitrite reductase activity whereby it regulates the production of bioactive nitric oxide. Under stress conditions, like hypoxia and anoxia, it also protects cells against reactive oxygen species thanks to its pseudoperoxidase activity. This Vulpes chama (Cape fox) protein is Myoglobin (MB).